The sequence spans 463 residues: Argininosuccinate lyase (463 aa).

Belongs to the lyase 1 family. Argininosuccinate lyase subfamily.

Its subcellular location is the cytoplasm. The enzyme catalyses 2-(N(omega)-L-arginino)succinate = fumarate + L-arginine. It functions in the pathway amino-acid biosynthesis; L-arginine biosynthesis; L-arginine from L-ornithine and carbamoyl phosphate: step 3/3. This chain is Argininosuccinate lyase, found in Thiobacillus denitrificans (strain ATCC 25259 / T1).